The primary structure comprises 392 residues: Succinate--CoA ligase [ADP-forming] subunit beta (392 aa).

The ATP-grasp domain occupies 9–248 (KGILKQFGVA…ITEEDPLEYE (240 aa)). Residues lysine 50, 57-59 (GRG), glutamate 103, methionine 106, and glutamate 111 contribute to the ATP site. 2 residues coordinate Mg(2+): asparagine 203 and aspartate 217. Substrate-binding positions include asparagine 268 and 325 to 327 (GIV).

This sequence belongs to the succinate/malate CoA ligase beta subunit family. In terms of assembly, heterotetramer of two alpha and two beta subunits. It depends on Mg(2+) as a cofactor.

The enzyme catalyses succinate + ATP + CoA = succinyl-CoA + ADP + phosphate. It catalyses the reaction GTP + succinate + CoA = succinyl-CoA + GDP + phosphate. It participates in carbohydrate metabolism; tricarboxylic acid cycle; succinate from succinyl-CoA (ligase route): step 1/1. In terms of biological role, succinyl-CoA synthetase functions in the citric acid cycle (TCA), coupling the hydrolysis of succinyl-CoA to the synthesis of either ATP or GTP and thus represents the only step of substrate-level phosphorylation in the TCA. The beta subunit provides nucleotide specificity of the enzyme and binds the substrate succinate, while the binding sites for coenzyme A and phosphate are found in the alpha subunit. This chain is Succinate--CoA ligase [ADP-forming] subunit beta, found in Chlorobaculum tepidum (strain ATCC 49652 / DSM 12025 / NBRC 103806 / TLS) (Chlorobium tepidum).